A 355-amino-acid chain; its full sequence is Glutamyl aminopeptidase (355 aa).

Residues histidine 65 and aspartate 181 each contribute to the a divalent metal cation site. Glutamate 213 serves as the catalytic Proton acceptor. A divalent metal cation is bound by residues glutamate 214, aspartate 236, and histidine 319.

Belongs to the peptidase M42 family. It depends on a divalent metal cation as a cofactor.

It carries out the reaction Release of N-terminal glutamate (and to a lesser extent aspartate) from a peptide.. This is Glutamyl aminopeptidase (pepA) from Lactococcus lactis subsp. cremoris (strain MG1363).